A 122-amino-acid polypeptide reads, in one-letter code: Small ribosomal subunit protein bS16 (122 aa).

Residues 85 to 122 form a disordered region; it reads REAKNNPIKAKPGKRAQERAAEKAQKAADAAAAADAAE. Basic and acidic residues predominate over residues 99–110; that stretch reads RAQERAAEKAQK. Over residues 111-122 the composition is skewed to low complexity; it reads AADAAAAADAAE.

It belongs to the bacterial ribosomal protein bS16 family.

This chain is Small ribosomal subunit protein bS16, found in Rhizobium etli (strain ATCC 51251 / DSM 11541 / JCM 21823 / NBRC 15573 / CFN 42).